The following is a 23-amino-acid chain: NADH-ubiquinone oxidoreductase 29 kDa subunit (23 aa).

Complex I is composed of about 45 different subunits.

The protein localises to the mitochondrion inner membrane. It carries out the reaction a ubiquinone + NADH + 5 H(+)(in) = a ubiquinol + NAD(+) + 4 H(+)(out). Its function is as follows. Transfer of electrons from NADH to the respiratory chain. The immediate electron acceptor for the enzyme is believed to be ubiquinone. The chain is NADH-ubiquinone oxidoreductase 29 kDa subunit from Solanum tuberosum (Potato).